A 64-amino-acid chain; its full sequence is Large ribosomal subunit protein uL29 (64 aa).

Belongs to the universal ribosomal protein uL29 family.

The chain is Large ribosomal subunit protein uL29 from Solidesulfovibrio magneticus (strain ATCC 700980 / DSM 13731 / RS-1) (Desulfovibrio magneticus).